The sequence spans 420 residues: tRNA (guanine-N(7)-)-methyltransferase non-catalytic subunit TRM82 (420 aa).

Residues 59–68 (KENDSKRQKS) show a composition bias toward basic and acidic residues. Residues 59–82 (KENDSKRQKSESGQAKVSKIPTPG) form a disordered region. 4 WD repeats span residues 87–127 (PIYN…DNCL), 179–220 (GHVS…VIKN), 224–266 (GHHE…AKIE), and 340–379 (SYED…EETN).

It belongs to the WD repeat TRM82 family. In terms of assembly, forms a heterodimer with the catalytic subunit TRM8.

It localises to the nucleus. It functions in the pathway tRNA modification; N(7)-methylguanine-tRNA biosynthesis. Functionally, required for the formation of N(7)-methylguanine at position 46 (m7G46) in tRNA. In the complex, it is required to stabilize and induce conformational changes of the catalytic subunit. The sequence is that of tRNA (guanine-N(7)-)-methyltransferase non-catalytic subunit TRM82 from Meyerozyma guilliermondii (strain ATCC 6260 / CBS 566 / DSM 6381 / JCM 1539 / NBRC 10279 / NRRL Y-324) (Yeast).